The following is a 196-amino-acid chain: Peptidyl-tRNA hydrolase (196 aa).

Tyrosine 18 is a tRNA binding site. Histidine 23 acts as the Proton acceptor in catalysis. TRNA contacts are provided by phenylalanine 69, asparagine 71, and asparagine 117.

The protein belongs to the PTH family. Monomer.

The protein localises to the cytoplasm. It catalyses the reaction an N-acyl-L-alpha-aminoacyl-tRNA + H2O = an N-acyl-L-amino acid + a tRNA + H(+). Hydrolyzes ribosome-free peptidyl-tRNAs (with 1 or more amino acids incorporated), which drop off the ribosome during protein synthesis, or as a result of ribosome stalling. Functionally, catalyzes the release of premature peptidyl moieties from peptidyl-tRNA molecules trapped in stalled 50S ribosomal subunits, and thus maintains levels of free tRNAs and 50S ribosomes. The polypeptide is Peptidyl-tRNA hydrolase (Aliivibrio salmonicida (strain LFI1238) (Vibrio salmonicida (strain LFI1238))).